We begin with the raw amino-acid sequence, 89 residues long: Small ribosomal subunit protein bS20 (89 aa).

Positions 1-22 (MANTASARKRIRQNERRRERNV) are disordered. Residues 12–22 (RQNERRRERNV) show a composition bias toward basic and acidic residues.

This sequence belongs to the bacterial ribosomal protein bS20 family.

Functionally, binds directly to 16S ribosomal RNA. This Gluconobacter oxydans (strain 621H) (Gluconobacter suboxydans) protein is Small ribosomal subunit protein bS20.